We begin with the raw amino-acid sequence, 556 residues long: Glycosyl hydrolase 5 family protein (556 aa).

Positions 1–28 (MTSAGVAPTALRLLTALLLLLVAAPSHS) are cleaved as a signal peptide. N-linked (GlcNAc...) asparagine glycosylation is found at asparagine 102 and asparagine 113. Glutamate 208 serves as the catalytic Proton donor/acceptor. N-linked (GlcNAc...) asparagine glycans are attached at residues asparagine 212, asparagine 290, and asparagine 307. The active-site Nucleophile is the glutamate 473. Asparagine 474 and asparagine 479 each carry an N-linked (GlcNAc...) asparagine glycan.

The protein belongs to the glycosyl hydrolase 5 (cellulase A) family. In terms of processing, glycosylated.

May have glycosyl hydrolase activity. In Chamaecyparis obtusa (Hinoki false-cypress), this protein is Glycosyl hydrolase 5 family protein.